The sequence spans 392 residues: Succinate--CoA ligase [ADP-forming] subunit beta (392 aa).

Positions 9-248 (KDILRKFGVA…ISEEDPFEVE (240 aa)) constitute an ATP-grasp domain. Residues Lys-50, 57-59 (GRG), Glu-103, Met-106, and Glu-111 contribute to the ATP site. Asn-203 and Asp-217 together coordinate Mg(2+). Substrate contacts are provided by residues Asn-268 and 325–327 (GIV).

This sequence belongs to the succinate/malate CoA ligase beta subunit family. Heterotetramer of two alpha and two beta subunits. It depends on Mg(2+) as a cofactor.

It carries out the reaction succinate + ATP + CoA = succinyl-CoA + ADP + phosphate. It catalyses the reaction GTP + succinate + CoA = succinyl-CoA + GDP + phosphate. It participates in carbohydrate metabolism; tricarboxylic acid cycle; succinate from succinyl-CoA (ligase route): step 1/1. Functionally, succinyl-CoA synthetase functions in the citric acid cycle (TCA), coupling the hydrolysis of succinyl-CoA to the synthesis of either ATP or GTP and thus represents the only step of substrate-level phosphorylation in the TCA. The beta subunit provides nucleotide specificity of the enzyme and binds the substrate succinate, while the binding sites for coenzyme A and phosphate are found in the alpha subunit. The chain is Succinate--CoA ligase [ADP-forming] subunit beta from Chlorobium phaeobacteroides (strain DSM 266 / SMG 266 / 2430).